The sequence spans 148 residues: UPF0178 protein LPC_0108 (148 aa).

It belongs to the UPF0178 family.

This chain is UPF0178 protein LPC_0108, found in Legionella pneumophila (strain Corby).